The following is a 202-amino-acid chain: Recombination protein RecR (202 aa).

The C4-type zinc-finger motif lies at cysteine 56 to cysteine 71. The 101-residue stretch at glycine 79–proline 179 folds into the Toprim domain.

It belongs to the RecR family.

In terms of biological role, may play a role in DNA repair. It seems to be involved in an RecBC-independent recombinational process of DNA repair. It may act with RecF and RecO. This Granulibacter bethesdensis (strain ATCC BAA-1260 / CGDNIH1) protein is Recombination protein RecR.